A 396-amino-acid polypeptide reads, in one-letter code: Putative 2-hydroxyacid dehydrogenase YPL113C (396 aa).

NAD(+) is bound by residues 227 to 228, 311 to 313, and Asp337; these read SI and VGR. Residue Arg313 is part of the active site. Glu342 is an active-site residue. The active-site Proton donor is the His361. 361–364 serves as a coordination point for NAD(+); that stretch reads HIGS.

The protein belongs to the D-isomer specific 2-hydroxyacid dehydrogenase family.

In terms of biological role, putative 2-hydroxyacid dehydrogenase. The protein is Putative 2-hydroxyacid dehydrogenase YPL113C of Saccharomyces cerevisiae (strain ATCC 204508 / S288c) (Baker's yeast).